Consider the following 518-residue polypeptide: Major facilitator superfamily multidrug transporter mfsC (518 aa).

The next 7 helical transmembrane spans lie at 27 to 47 (VLLT…SVLF), 65 to 85 (WVLI…GQLG), 88 to 108 (FGLE…NVIN), 123 to 143 (ISGV…SNTF), 152 to 172 (ALAI…VVGS), 183 to 203 (IFWL…LFLP), and 212 to 232 (PIDI…VYGL). The N-linked (GlcNAc...) asparagine glycan is linked to Asn233. The next 7 helical transmembrane spans lie at 242–262 (SAAM…FLWV), 281–301 (FLVM…WFFI), 315–335 (ILTA…GVFA), 347–367 (ILVA…FAGP), 380–400 (TAII…SILL), 409–429 (AVAG…ILAG), and 455–475 (AFWL…VCYW).

It belongs to the major facilitator superfamily. EmrB family.

The protein resides in the membrane. Major facilitator superfamily transporter that may be involved in A.fumigatus adaptation to azoles such as vorizonazole. In Aspergillus fumigatus (strain ATCC MYA-4609 / CBS 101355 / FGSC A1100 / Af293) (Neosartorya fumigata), this protein is Major facilitator superfamily multidrug transporter mfsC.